We begin with the raw amino-acid sequence, 115 residues long: Thrombospondin type-1 domain-containing protein 8 (115 aa).

The N-terminal stretch at 1–21 (MARTPGALLLAPLLLLQLATP) is a signal peptide. The region spanning 53–104 (DSILGPWGKWRCLCDLGKQERSREVVGTAPGPVFMDPEKLIQLRPCRQRDCP) is the TSP type-1 domain.

The protein is Thrombospondin type-1 domain-containing protein 8 of Homo sapiens (Human).